Here is a 1051-residue protein sequence, read N- to C-terminus: Putative transcription factor SEF1 (1051 aa).

Over residues 1 to 10 the composition is skewed to basic and acidic residues; sequence MSTDVSERGA. Disordered stretches follow at residues 1–54 and 67–90; these read MSTD…SEES and GQASPDRSKVSKQQNGASGHRPVT. A compositionally biased stretch (low complexity) spans 11–21; the sequence is EAGSSSGLLSS. The zn(2)-C6 fungal-type DNA-binding region spans 92-122; the sequence is CTHCRQHKIKCNASENFPSSCSRCERMGLQC. Positions 206–218 are enriched in low complexity; the sequence is SSVKSSVNTPSGS. Disordered regions lie at residues 206 to 227, 738 to 759, and 927 to 968; these read SSVKSSVNTPSGSYSASAVDVS, EKNRKEQPVHTAATGSQDTEKR, and ASGN…QPAP.

Its subcellular location is the nucleus. In terms of biological role, putative transcription factor. The chain is Putative transcription factor SEF1 (SEF1) from Eremothecium gossypii (strain ATCC 10895 / CBS 109.51 / FGSC 9923 / NRRL Y-1056) (Yeast).